The primary structure comprises 435 residues: Trigger factor (435 aa).

The PPIase FKBP-type domain occupies 163–248 (GDYVTFDFKG…IKEIKVKELP (86 aa)).

The protein belongs to the FKBP-type PPIase family. Tig subfamily.

It is found in the cytoplasm. The catalysed reaction is [protein]-peptidylproline (omega=180) = [protein]-peptidylproline (omega=0). Involved in protein export. Acts as a chaperone by maintaining the newly synthesized protein in an open conformation. Functions as a peptidyl-prolyl cis-trans isomerase. The chain is Trigger factor from Geotalea daltonii (strain DSM 22248 / JCM 15807 / FRC-32) (Geobacter daltonii).